We begin with the raw amino-acid sequence, 301 residues long: Protoheme IX farnesyltransferase (301 aa).

9 helical membrane passes run 16-36 (VVAL…PGIP), 41-61 (IQSG…AAAI), 93-113 (VFAG…VNLI), 114-134 (TAVL…VYLK), 141-161 (IVIG…AVTG), 172-192 (SLLV…LAIF), 217-237 (QILL…ATGM), 238-258 (SGVF…WYAW), and 273-293 (FGYS…DHWL).

Belongs to the UbiA prenyltransferase family. Protoheme IX farnesyltransferase subfamily.

It localises to the cell inner membrane. It carries out the reaction heme b + (2E,6E)-farnesyl diphosphate + H2O = Fe(II)-heme o + diphosphate. The protein operates within porphyrin-containing compound metabolism; heme O biosynthesis; heme O from protoheme: step 1/1. Its function is as follows. Converts heme B (protoheme IX) to heme O by substitution of the vinyl group on carbon 2 of heme B porphyrin ring with a hydroxyethyl farnesyl side group. The polypeptide is Protoheme IX farnesyltransferase (Xylella fastidiosa (strain 9a5c)).